A 302-amino-acid polypeptide reads, in one-letter code: Ribonuclease HII (302 aa).

Residues 53–297 enclose the RNase H type-2 domain; it reads EFEIGVDEVG…VQQAIEGTLA (245 aa). D59, E60, and D163 together coordinate a divalent metal cation.

This sequence belongs to the RNase HII family. Mn(2+) serves as cofactor. It depends on Mg(2+) as a cofactor.

Its subcellular location is the cytoplasm. The catalysed reaction is Endonucleolytic cleavage to 5'-phosphomonoester.. Its function is as follows. Endonuclease that specifically degrades the RNA of RNA-DNA hybrids. The sequence is that of Ribonuclease HII from Psychrobacter sp. (strain PRwf-1).